The sequence spans 1175 residues: Solute carrier family 9 member C1 (1175 aa).

Topologically, residues methionine 1 to glutamate 39 are extracellular. Residues isoleucine 40–lysine 59 form a helical membrane-spanning segment. Residues aspartate 60–proline 64 are Cytoplasmic-facing. A helical transmembrane segment spans residues leucine 65–alanine 82. At serine 83–proline 98 the chain is on the extracellular side. Residues aspartate 99 to phenylalanine 115 traverse the membrane as a helical segment. At aspartate 116–leucine 125 the chain is on the cytoplasmic side. Residues phenylalanine 126–valine 151 form a helical membrane-spanning segment. Residues phenylalanine 126–histidine 213 are transport core domain. Residues asparagine 152–lysine 157 lie on the Extracellular side of the membrane. A helical transmembrane segment spans residues threonine 158 to leucine 183. The Cytoplasmic portion of the chain corresponds to glycine 184–serine 186. Residues arginine 187–valine 212 form a helical membrane-spanning segment. Topologically, residues histidine 213–leucine 225 are extracellular. The helical transmembrane segment at alanine 226–threonine 257 threads the bilayer. At isoleucine 258–aspartate 261 the chain is on the cytoplasmic side. A helical membrane pass occupies residues aspartate 262 to valine 283. Residues glycine 284 to serine 286 are Extracellular-facing. Residues glycine 287 to serine 300 traverse the membrane as a helical segment. Residues threonine 301–valine 307 are Cytoplasmic-facing. Residues glutamate 308 to tyrosine 339 traverse the membrane as a helical segment. The Extracellular portion of the chain corresponds to leucine 340–phenylalanine 344. The helical transmembrane segment at serine 345–arginine 374 threads the bilayer. The segment at serine 345–leucine 446 is transport core domain. At leucine 375–serine 380 the chain is on the cytoplasmic side. The chain crosses the membrane as a helical span at residues tryptophan 381–leucine 411. At glycine 412–arginine 415 the chain is on the extracellular side. The chain crosses the membrane as a helical span at residues glutamate 416 to leucine 446. The Cytoplasmic portion of the chain corresponds to glycine 447–glutamate 632. The ion transport-like stretch occupies residues tyrosine 618 to phenylalanine 698. The helical transmembrane segment at phenylalanine 633–isoleucine 653 threads the bilayer. The Extracellular portion of the chain corresponds to serine 654 to lysine 657. A helical transmembrane segment spans residues aspartate 658–alanine 684. The Cytoplasmic segment spans residues alanine 685–phenylalanine 691. The chain crosses the membrane as a helical span at residues serine 692–aspartate 716. The Extracellular segment spans residues serine 717–leucine 724. Residues threonine 725–leucine 751 form a helical membrane-spanning segment. The Cytoplasmic portion of the chain corresponds to glutamine 752–isoleucine 1175. Basic and acidic residues predominate over residues methionine 1137–phenylalanine 1146. A disordered region spans residues methionine 1137–isoleucine 1175. Positions glutamate 1164 to isoleucine 1175 are enriched in acidic residues.

This sequence belongs to the monovalent cation:proton antiporter 1 (CPA1) transporter (TC 2.A.36) family. In terms of assembly, interacts with soluble adenylyl cyclase (sAC). As to expression, testis-specific. Specifically present in the principal piece of sperm tail (at protein level).

It is found in the cell projection. The protein resides in the cilium. It localises to the flagellum membrane. Sperm-specific solute carrier involved in intracellular pH regulation of spermatozoa. Required for sperm motility and fertility. Involved in sperm cell hyperactivation, a step needed for sperm motility which is essential late in the preparation of sperm for fertilization. Required for the expression and bicarbonate regulation of the soluble adenylyl cyclase (sAC). In Mus musculus (Mouse), this protein is Solute carrier family 9 member C1 (Slc9c1).